Consider the following 1026-residue polypeptide: Multidrug resistance protein MdtC (1026 aa).

The next 11 helical transmembrane spans lie at 15 to 35 (ILIA…LPVA), 333 to 353 (EVEE…FLFL), 360 to 380 (LIPA…MYLC), 387 to 407 (LSLM…IVVL), 431 to 451 (VGFT…PLLL), 463 to 483 (FAVT…TLTP), 528 to 548 (LVGV…IAIP), 853 to 873 (LILI…LYES), 897 to 917 (LFNA…IGIV), 953 to 973 (PIMM…LSDG), and 984 to 1004 (ITIV…TPVV).

This sequence belongs to the resistance-nodulation-cell division (RND) (TC 2.A.6) family. MdtC subfamily. As to quaternary structure, part of a tripartite efflux system composed of MdtA, MdtB and MdtC. MdtC forms a heteromultimer with MdtB.

The protein localises to the cell inner membrane. This is Multidrug resistance protein MdtC from Salmonella paratyphi B (strain ATCC BAA-1250 / SPB7).